Reading from the N-terminus, the 233-residue chain is Thymidylate kinase (233 aa).

10–17 (GVDGVGKT) provides a ligand contact to ATP.

It belongs to the thymidylate kinase family.

It catalyses the reaction dTMP + ATP = dTDP + ADP. Functionally, phosphorylation of dTMP to form dTDP in both de novo and salvage pathways of dTTP synthesis. In Bifidobacterium longum subsp. infantis (strain ATCC 15697 / DSM 20088 / JCM 1222 / NCTC 11817 / S12), this protein is Thymidylate kinase.